The chain runs to 311 residues: Aspartate carbamoyltransferase catalytic subunit (311 aa).

Carbamoyl phosphate-binding residues include Arg-59 and Thr-60. L-aspartate is bound at residue Lys-87. Carbamoyl phosphate is bound by residues Arg-109, His-139, and Gln-142. L-aspartate contacts are provided by Arg-172 and Arg-224. Residues Ala-265 and Pro-266 each contribute to the carbamoyl phosphate site.

The protein belongs to the aspartate/ornithine carbamoyltransferase superfamily. ATCase family. As to quaternary structure, heterododecamer (2C3:3R2) of six catalytic PyrB chains organized as two trimers (C3), and six regulatory PyrI chains organized as three dimers (R2).

The catalysed reaction is carbamoyl phosphate + L-aspartate = N-carbamoyl-L-aspartate + phosphate + H(+). Its pathway is pyrimidine metabolism; UMP biosynthesis via de novo pathway; (S)-dihydroorotate from bicarbonate: step 2/3. Its function is as follows. Catalyzes the condensation of carbamoyl phosphate and aspartate to form carbamoyl aspartate and inorganic phosphate, the committed step in the de novo pyrimidine nucleotide biosynthesis pathway. The chain is Aspartate carbamoyltransferase catalytic subunit from Streptococcus equi subsp. equi (strain 4047).